Here is a 355-residue protein sequence, read N- to C-terminus: Electron transfer flavoprotein subunit alpha, mitochondrial (355 aa).

Residue Leu-295 to Asp-323 participates in FAD binding.

The protein belongs to the ETF alpha-subunit/FixB family. Heterodimer of an alpha and a beta subunit. It depends on FAD as a cofactor.

The protein resides in the mitochondrion matrix. The electron transfer flavoprotein serves as a specific electron acceptor for several dehydrogenases, including five acyl-CoA dehydrogenases, glutaryl-CoA and sarcosine dehydrogenase. It transfers the electrons to the main mitochondrial respiratory chain via ETF-ubiquinone oxidoreductase (ETF dehydrogenase). This chain is Electron transfer flavoprotein subunit alpha, mitochondrial (etfa), found in Dictyostelium discoideum (Social amoeba).